Here is a 223-residue protein sequence, read N- to C-terminus: RNA pyrophosphohydrolase (223 aa).

The region spanning 6 to 149 (GFRPNVGIIL…KRGVYEMALT (144 aa)) is the Nudix hydrolase domain. The short motif at 38–59 (GGIDRGESPEQAMFRELHEEVG) is the Nudix box element. The disordered stretch occupies residues 175 to 223 (ERHMPDGGAPAGLDLPPGGSFDPHPDITSASDDPSPPPHNKAPFLPSQR). Positions 180–193 (DGGAPAGLDLPPGG) are enriched in low complexity.

It belongs to the Nudix hydrolase family. RppH subfamily. The cofactor is a divalent metal cation.

Its function is as follows. Accelerates the degradation of transcripts by removing pyrophosphate from the 5'-end of triphosphorylated RNA, leading to a more labile monophosphorylated state that can stimulate subsequent ribonuclease cleavage. This is RNA pyrophosphohydrolase from Variovorax paradoxus (strain S110).